A 905-amino-acid polypeptide reads, in one-letter code: Protein translocase subunit SecA (905 aa).

ATP contacts are provided by residues Gln-86, Gly-104–Thr-108, and Asp-499. Residues Cys-890, Cys-892, Cys-901, and His-902 each contribute to the Zn(2+) site.

It belongs to the SecA family. Monomer and homodimer. Part of the essential Sec protein translocation apparatus which comprises SecA, SecYEG and auxiliary proteins SecDF-YajC and YidC. Zn(2+) is required as a cofactor.

It localises to the cell inner membrane. Its subcellular location is the cytoplasm. It carries out the reaction ATP + H2O + cellular proteinSide 1 = ADP + phosphate + cellular proteinSide 2.. Functionally, part of the Sec protein translocase complex. Interacts with the SecYEG preprotein conducting channel. Has a central role in coupling the hydrolysis of ATP to the transfer of proteins into and across the cell membrane, serving both as a receptor for the preprotein-SecB complex and as an ATP-driven molecular motor driving the stepwise translocation of polypeptide chains across the membrane. This chain is Protein translocase subunit SecA, found in Rickettsia typhi (strain ATCC VR-144 / Wilmington).